A 227-amino-acid polypeptide reads, in one-letter code: Phosphoribosylformylglycinamidine synthase subunit PurQ (227 aa).

The region spanning 3-225 (FAVIVLPGSN…VKNWRETHVA (223 aa)) is the Glutamine amidotransferase type-1 domain. The active-site Nucleophile is Cys-86. Active-site residues include His-194 and Glu-196.

Part of the FGAM synthase complex composed of 1 PurL, 1 PurQ and 2 PurS subunits.

The protein localises to the cytoplasm. The enzyme catalyses N(2)-formyl-N(1)-(5-phospho-beta-D-ribosyl)glycinamide + L-glutamine + ATP + H2O = 2-formamido-N(1)-(5-O-phospho-beta-D-ribosyl)acetamidine + L-glutamate + ADP + phosphate + H(+). It carries out the reaction L-glutamine + H2O = L-glutamate + NH4(+). The protein operates within purine metabolism; IMP biosynthesis via de novo pathway; 5-amino-1-(5-phospho-D-ribosyl)imidazole from N(2)-formyl-N(1)-(5-phospho-D-ribosyl)glycinamide: step 1/2. In terms of biological role, part of the phosphoribosylformylglycinamidine synthase complex involved in the purines biosynthetic pathway. Catalyzes the ATP-dependent conversion of formylglycinamide ribonucleotide (FGAR) and glutamine to yield formylglycinamidine ribonucleotide (FGAM) and glutamate. The FGAM synthase complex is composed of three subunits. PurQ produces an ammonia molecule by converting glutamine to glutamate. PurL transfers the ammonia molecule to FGAR to form FGAM in an ATP-dependent manner. PurS interacts with PurQ and PurL and is thought to assist in the transfer of the ammonia molecule from PurQ to PurL. This Bacillus licheniformis (strain ATCC 14580 / DSM 13 / JCM 2505 / CCUG 7422 / NBRC 12200 / NCIMB 9375 / NCTC 10341 / NRRL NRS-1264 / Gibson 46) protein is Phosphoribosylformylglycinamidine synthase subunit PurQ.